Consider the following 248-residue polypeptide: uncharacterized protein (248 aa).

A helical membrane pass occupies residues 104–122 (CDVAACVGATWIAGGFAGA).

The protein localises to the membrane. This is an uncharacterized protein from Escherichia coli (strain K12).